Consider the following 109-residue polypeptide: uncharacterized protein (109 aa).

The signal sequence occupies residues 1–22 (MKPYSTLFLFTLLTLTTVPAQA). Positions 39–109 (AYNPDHGRDY…ERRMEDEYGQ (71 aa)) are disordered. Residues 41–109 (NPDHGRDYED…ERRMEDEYGQ (69 aa)) show a composition bias toward basic and acidic residues.

This is an uncharacterized protein from Shigella dysenteriae serotype 1 (strain Sd197).